Here is a 554-residue protein sequence, read N- to C-terminus: MTPLIFVTGGVVSSLGKGIAAASLASILEARGLKVTMVKLDPYINVDPGTMSPFQHGEVYVTDDGAETDLDLGHYERFVRTRLSRKNSVTTGRIYQNVICKERRGDYLGATVQVIPHITDEIRRCIDEATASFDVALVEIGGTVGDIESLPFLEAIRQVRIERGAERTMFMHLTLVPYIAAAGELKTKPTQHSVKELRSIGIQPDVLLCRSEQVIPDSERRKIALFTNVSERAVIGCPDIDVLYGMPLELRRQGLDEIVIDQFKLSGTTSLADLSEWEDVVDAIKHPLDEVTIAVVGKYVDYRDAYKSVGEALKHGGLRQRTKVNLKWVEAQDLEGSDMAALKDIDGILVPGGFGDRGFEGKVLASRYAREQRVPYFGICYGMQAAVVDYARHVAGLEGANSTENDRQSSHPVIALITEWRTTTGEVERRDEKSDLGGTMRLGLQEQRLKAGTLARELYGRDVVGERHRHRYEFNNRYRTQLEDAGLVIAAKSMDDTLVEMIELPREMHPWFLACQAHPEFLSTPRDGHPLFIGFVKASRARKAGGKLLREVCV.

The segment at 1–265 (MTPLIFVTGG…DEIVIDQFKL (265 aa)) is amidoligase domain. CTP is bound at residue S13. Residue S13 coordinates UTP. ATP is bound by residues 14–19 (SLGKGI) and D71. Mg(2+) is bound by residues D71 and E139. CTP contacts are provided by residues 146-148 (DIE), 186-191 (KTKPTQ), and K222. Residues 186-191 (KTKPTQ) and K222 each bind UTP. The 254-residue stretch at 292–545 (TIAVVGKYVD…VKASRARKAG (254 aa)) folds into the Glutamine amidotransferase type-1 domain. G353 contributes to the L-glutamine binding site. C380 (nucleophile; for glutamine hydrolysis) is an active-site residue. Residues 381–384 (YGMQ), E404, and R471 each bind L-glutamine. Catalysis depends on residues H518 and E520.

It belongs to the CTP synthase family. Homotetramer.

It carries out the reaction UTP + L-glutamine + ATP + H2O = CTP + L-glutamate + ADP + phosphate + 2 H(+). The catalysed reaction is L-glutamine + H2O = L-glutamate + NH4(+). It catalyses the reaction UTP + NH4(+) + ATP = CTP + ADP + phosphate + 2 H(+). Its pathway is pyrimidine metabolism; CTP biosynthesis via de novo pathway; CTP from UDP: step 2/2. Its activity is regulated as follows. Allosterically activated by GTP, when glutamine is the substrate; GTP has no effect on the reaction when ammonia is the substrate. The allosteric effector GTP functions by stabilizing the protein conformation that binds the tetrahedral intermediate(s) formed during glutamine hydrolysis. Inhibited by the product CTP, via allosteric rather than competitive inhibition. Functionally, catalyzes the ATP-dependent amination of UTP to CTP with either L-glutamine or ammonia as the source of nitrogen. Regulates intracellular CTP levels through interactions with the four ribonucleotide triphosphates. This Xylella fastidiosa (strain M12) protein is CTP synthase.